The chain runs to 210 residues: uncharacterized protein (210 aa).

The next 4 membrane-spanning stretches (helical) occupy residues Leu-5–Val-25, Phe-50–Phe-70, Tyr-75–Phe-95, and Ile-155–Ile-175.

It belongs to the Rht family.

It localises to the cell membrane. This is an uncharacterized protein from Bacillus subtilis (strain 168).